The chain runs to 179 residues: Large ribosomal subunit protein uL5 (179 aa).

The protein belongs to the universal ribosomal protein uL5 family. In terms of assembly, part of the 50S ribosomal subunit; part of the 5S rRNA/L5/L18/L25 subcomplex. Contacts the 5S rRNA and the P site tRNA. Forms a bridge to the 30S subunit in the 70S ribosome.

Functionally, this is one of the proteins that bind and probably mediate the attachment of the 5S RNA into the large ribosomal subunit, where it forms part of the central protuberance. In the 70S ribosome it contacts protein S13 of the 30S subunit (bridge B1b), connecting the 2 subunits; this bridge is implicated in subunit movement. Contacts the P site tRNA; the 5S rRNA and some of its associated proteins might help stabilize positioning of ribosome-bound tRNAs. This chain is Large ribosomal subunit protein uL5, found in Xylella fastidiosa (strain M12).